A 347-amino-acid polypeptide reads, in one-letter code: Heat-inducible transcription repressor HrcA (347 aa).

It belongs to the HrcA family.

Its function is as follows. Negative regulator of class I heat shock genes (grpE-dnaK-dnaJ and groELS operons). Prevents heat-shock induction of these operons. The protein is Heat-inducible transcription repressor HrcA of Lactobacillus delbrueckii subsp. bulgaricus (strain ATCC BAA-365 / Lb-18).